The chain runs to 889 residues: MLSIGAMANIKHTLQKELFLASGERLLSVVTVVKKKDKKPCYLCVVTTAPPVPVVTLCLIKQSEQREGEYKRKRSWQLDEIKWVDGRNEQFETHEFDLQLEKLYKWYALNPHERQNFLAVLNRQIQKSVRGQRAEFRNVPAAWLSEKSPEKVALGRAVQKTQHMDDEEDEEEEAQEFTALTDKEANELGKLFSECDFAIKDAEQFIEQLSRELHDLDGANMQSVLASEQKVLKMMEHIDNAISEADKFENRLDSYEDILGHVKETMEKIGGKNAMIEIANNNNIKLMKELNKVISQLDLPHSQQQALDEPDLKTANGRKAAIAAAQCLQQAMNSDIDPALLRLEAVQDQRKRFEKWKQKFSATVSRFMNNLFIHLGNEIGDMQVTSTELTLPNHSNVHRELTPYTELMHWTKAMDRKTYDGLMRVYTASLSKIYDRDVRNFFNLAKIQVTEKLRNSREDLDMSTSSRKSAVSTIPYGTLGINRDQWGPGVETADRMRFDALLEKVLAELEPIALQEQLFCINFFQMDVISPTTKNTQTTLEMEKAVDMTQSIISGAVSPSGDGVPQKRIDRQINEDVRKLMMGLFGCLEPELVSFIQSFERVDSFYSLYVFVRLTQHVMSAQDTHSFLSMTFASALVQVKRSFDRFMQNQLLSIREAKLHKRSKAILPYVENFENFAQTAEGIFRKSDRRTDMEKWYLQLVNAIFEGIQLHSQEHPKTPVQVVRMENYHHMYALLAQLKVPGLDALKKEAKKCYNDALKAYVTQYFGRPLEKLNQFFEGVQLKVAQGVKETEISYQMAFSKQELRKVIAQYPAREVKKGLENLYKKVEKHLSEEENLLQVVWHAMQEEFIAQYNYLEERIQKCYAGAMINLEFNIQDILAFFSDIARSH.

Residues Ser-145 and Ser-148 each carry the phosphoserine modification. The stretch at 156-269 (RAVQKTQHMD…GHVKETMEKI (114 aa)) forms a coiled coil. Residue Ser-456 is modified to Phosphoserine.

It belongs to the SEC3 family. As to quaternary structure, the exocyst complex is composed of Sec3/Exoc1, Sec5/Exoc2, Sec6/Exoc3, Sec8/Exoc4, Sec10/Exoc5, Sec15/Exoc6, Exo70/Exoc7 and Exo84/Exoc8.

Its function is as follows. Component of the exocyst complex involved in the docking of exocytic vesicles with fusion sites on the plasma membrane. In Drosophila melanogaster (Fruit fly), this protein is Exocyst complex component 1.